The chain runs to 640 residues: MSMSRGSVCRRCLLTMKSMAGGGPTSTYAQQRGKKTWHGPKYQAKIDQAQADWEERAEKIKKGEIQHTWDMFVERGYVKDTAGSHETIRKLMLHKRIGAYTGIDPTAPSLHIGHLLPLMPIFWMYMHGYAGYTLIGGATAKIGDPTDRLVSRTPLKRTDLTMNLTKIHYQLKALWMNVEEQARRRGFEKDWAWKRAVVNNSTWWNSLPLIEVLKRLGDSMRMGPLLSRDTVKNKMSKGDGMSFSEFTYPLMQGWDWWHMYQANGIQMQIGGSDQYGNIVTGVETVKVVRDNEPDPAKKIEGGPFNDPVGFTVPLLTDSAGVKFGKSAGNAFLDKFQTSEFDLYGYFVRRSDQEVEKLLKLFTFLPMENINEAMKIHSENPARRVAQHLLAFEVVGLVHGMNAAHRTALNHQARYGKQIDIPGVTLRMPKAATEDTPPSILDAPKMDMQLPESLIMGKSIGRILYAAGLAKSASEGHRLATQQGAYIGAMPGHKRTEDNKVMDYSQLSFTPIKLWFPQETRNYLIDGKLLILRKGKVQIRVIEMVSDEEWKESGQTYPGEPGTGALRMLRQQLKMLKSGMLTPDEVKANLKNHVEEEAPPPGFMKFPDQDSYAIRRATQELMDEIHQKEVGGDSPREERRE.

Residue Y100 coordinates L-tyrosine. D104 serves as a coordination point for ATP. The short motif at 105–114 (PTAPSLHIGH) is the 'HIGH' region element. Positions 144, 248, 252, 255, and 274 each coordinate L-tyrosine. The 'KMSKS' region motif lies at 322-326 (KFGKS). K325 provides a ligand contact to ATP.

This sequence belongs to the class-I aminoacyl-tRNA synthetase family.

It is found in the mitochondrion matrix. The catalysed reaction is tRNA(Tyr) + L-tyrosine + ATP = L-tyrosyl-tRNA(Tyr) + AMP + diphosphate + H(+). Functionally, has both an aminoacyl-tRNA synthetase activity and is involved in the splicing of group I introns. This Podospora anserina (Pleurage anserina) protein is Tyrosine--tRNA ligase, mitochondrial (YTS1).